The primary structure comprises 189 residues: Putative lipoprotein LppK (189 aa).

The N-terminal stretch at 1 to 22 (MRRNIRVTLGAATIVAALGLSG) is a signal peptide. A lipid anchor (N-palmitoyl cysteine) is attached at Cys-23. Cys-23 is lipidated: S-diacylglycerol cysteine. Disordered stretches follow at residues 26 to 49 (PEFK…LEAA) and 166 to 189 (MGNS…TPPG). The span at 169 to 179 (SPDSTPSATSP) shows a compositional bias: low complexity. Pro residues predominate over residues 180 to 189 (APAPSPTPPG).

This sequence belongs to the MTB12 family.

It is found in the cell membrane. This Mycobacterium tuberculosis (strain CDC 1551 / Oshkosh) protein is Putative lipoprotein LppK (lppK).